Consider the following 701-residue polypeptide: Elongation factor G (701 aa).

Residues 8 to 290 (KHYRNIGISA…AVIEYLPAPI (283 aa)) enclose the tr-type G domain. GTP contacts are provided by residues 17–24 (AHIDAGKT), 88–92 (DTPGH), and 142–145 (NKMD).

Belongs to the TRAFAC class translation factor GTPase superfamily. Classic translation factor GTPase family. EF-G/EF-2 subfamily.

The protein localises to the cytoplasm. Functionally, catalyzes the GTP-dependent ribosomal translocation step during translation elongation. During this step, the ribosome changes from the pre-translocational (PRE) to the post-translocational (POST) state as the newly formed A-site-bound peptidyl-tRNA and P-site-bound deacylated tRNA move to the P and E sites, respectively. Catalyzes the coordinated movement of the two tRNA molecules, the mRNA and conformational changes in the ribosome. The chain is Elongation factor G from Hamiltonella defensa subsp. Acyrthosiphon pisum (strain 5AT).